A 246-amino-acid chain; its full sequence is 1-(5-phosphoribosyl)-5-[(5-phosphoribosylamino)methylideneamino] imidazole-4-carboxamide isomerase (246 aa).

The Proton acceptor role is filled by Asp12. Asp134 (proton donor) is an active-site residue.

Belongs to the HisA/HisF family.

It is found in the cytoplasm. The catalysed reaction is 1-(5-phospho-beta-D-ribosyl)-5-[(5-phospho-beta-D-ribosylamino)methylideneamino]imidazole-4-carboxamide = 5-[(5-phospho-1-deoxy-D-ribulos-1-ylimino)methylamino]-1-(5-phospho-beta-D-ribosyl)imidazole-4-carboxamide. Its pathway is amino-acid biosynthesis; L-histidine biosynthesis; L-histidine from 5-phospho-alpha-D-ribose 1-diphosphate: step 4/9. This is 1-(5-phosphoribosyl)-5-[(5-phosphoribosylamino)methylideneamino] imidazole-4-carboxamide isomerase from Psychrobacter cryohalolentis (strain ATCC BAA-1226 / DSM 17306 / VKM B-2378 / K5).